A 247-amino-acid polypeptide reads, in one-letter code: DNA polymerase sliding clamp (247 aa).

Belongs to the PCNA family. Homotrimer. The subunits circularize to form a toroid; DNA passes through its center. Replication factor C (RFC) is required to load the toroid on the DNA.

In terms of biological role, sliding clamp subunit that acts as a moving platform for DNA processing. Responsible for tethering the catalytic subunit of DNA polymerase and other proteins to DNA during high-speed replication. The protein is DNA polymerase sliding clamp of Methanoregula boonei (strain DSM 21154 / JCM 14090 / 6A8).